The following is a 304-amino-acid chain: tRNA pseudouridine synthase B (304 aa).

The active-site Nucleophile is Asp48.

This sequence belongs to the pseudouridine synthase TruB family. Type 1 subfamily.

It carries out the reaction uridine(55) in tRNA = pseudouridine(55) in tRNA. Responsible for synthesis of pseudouridine from uracil-55 in the psi GC loop of transfer RNAs. This Pseudomonas aeruginosa (strain UCBPP-PA14) protein is tRNA pseudouridine synthase B.